Reading from the N-terminus, the 601-residue chain is Bifunctional protein GlmU (601 aa).

Residues 1–375 (MKSDLAIVIL…SELLLGVNNR (375 aa)) are pyrophosphorylase. Residues 10–13 (LAAG), Lys-24, Gln-75, and 81–82 (GT) contribute to the UDP-N-acetyl-alpha-D-glucosamine site. Asp-165 is a Mg(2+) binding site. UDP-N-acetyl-alpha-D-glucosamine-binding residues include Gly-201, Glu-216, Asn-230, and Asn-373. Asn-373 lines the Mg(2+) pocket. The segment at 376-396 (VQLAKTEKILNDQIIKRWQLY) is linker. Positions 397–601 (GVTIKSPETT…PKWAENRGDG (205 aa)) are N-acetyltransferase. The UDP-N-acetyl-alpha-D-glucosamine site is built by Arg-478 and Lys-496. The active-site Proton acceptor is His-508. 2 residues coordinate UDP-N-acetyl-alpha-D-glucosamine: Tyr-511 and Asn-522. Residues Ala-525, 531–532 (NY), and Ala-568 each bind acetyl-CoA.

This sequence in the N-terminal section; belongs to the N-acetylglucosamine-1-phosphate uridyltransferase family. The protein in the C-terminal section; belongs to the transferase hexapeptide repeat family. Homotrimer. Requires Mg(2+) as cofactor.

The protein resides in the cytoplasm. The enzyme catalyses alpha-D-glucosamine 1-phosphate + acetyl-CoA = N-acetyl-alpha-D-glucosamine 1-phosphate + CoA + H(+). The catalysed reaction is N-acetyl-alpha-D-glucosamine 1-phosphate + UTP + H(+) = UDP-N-acetyl-alpha-D-glucosamine + diphosphate. Its pathway is nucleotide-sugar biosynthesis; UDP-N-acetyl-alpha-D-glucosamine biosynthesis; N-acetyl-alpha-D-glucosamine 1-phosphate from alpha-D-glucosamine 6-phosphate (route II): step 2/2. It functions in the pathway nucleotide-sugar biosynthesis; UDP-N-acetyl-alpha-D-glucosamine biosynthesis; UDP-N-acetyl-alpha-D-glucosamine from N-acetyl-alpha-D-glucosamine 1-phosphate: step 1/1. It participates in bacterial outer membrane biogenesis; LPS lipid A biosynthesis. In terms of biological role, catalyzes the last two sequential reactions in the de novo biosynthetic pathway for UDP-N-acetylglucosamine (UDP-GlcNAc). The C-terminal domain catalyzes the transfer of acetyl group from acetyl coenzyme A to glucosamine-1-phosphate (GlcN-1-P) to produce N-acetylglucosamine-1-phosphate (GlcNAc-1-P), which is converted into UDP-GlcNAc by the transfer of uridine 5-monophosphate (from uridine 5-triphosphate), a reaction catalyzed by the N-terminal domain. This Tropheryma whipplei (strain TW08/27) (Whipple's bacillus) protein is Bifunctional protein GlmU.